A 1396-amino-acid chain; its full sequence is DNA ligase 6 (1396 aa).

Disordered stretches follow at residues 441–464 and 562–599; these read KNACEDGGENVPSSRGPILHDTTP and MNLTKGTISPGKRGKSSGSKSNKKAKKDPKSKPVGPGQ. 2 consecutive short sequence motifs (nuclear localization signal) follow at residues 572 to 579 and 886 to 893; these read GKRGKSSG and LRKISVQT. Glu1037 contacts ATP. The active-site N6-AMP-lysine intermediate is the Lys1039. ATP contacts are provided by Arg1044, Arg1060, Glu1092, and Phe1136. Glu1092 lines the Mg(2+) pocket. Glu1207 is a binding site for Mg(2+). ATP-binding residues include Lys1212, Arg1225, and Lys1231.

This sequence belongs to the ATP-dependent DNA ligase family. The cofactor is Mg(2+). In terms of tissue distribution, mostly expressed in buds and flowers, and, to a lower extent, in stems, leaves, siliques and seeds.

The protein resides in the nucleus. The enzyme catalyses ATP + (deoxyribonucleotide)n-3'-hydroxyl + 5'-phospho-(deoxyribonucleotide)m = (deoxyribonucleotide)n+m + AMP + diphosphate.. Functionally, DNA ligase that seals nicks in double-stranded DNA during DNA replication, DNA recombination and DNA repair. Required to maintain seed viability (e.g. longevity and storability) and during seed germination, probably by repairing DNA damage accumulated during seed development, storage and/or imbibition. Facilitates seed germination in cold conditions (2 degrees Celsius) and under oxidative stress (e.g. menadione, a genotoxic agent). Involved in repair of X-ray-induced damage. In terms of biological role, limits stable root transformation by A.tumefaciens T-DNA. The polypeptide is DNA ligase 6 (Arabidopsis thaliana (Mouse-ear cress)).